The chain runs to 257 residues: MLAKRIIPCLDVRDGQVVKGVQFRNHEIIGDIVPLAERYAKEGADELVFYDITASSDGRVVDKSWVSRVAEVIDIPFCVAGGIRSVEDAGKILSFGADKISINSPALSDPTLISRLADRYGVQCVVVGIDTWFDEKTGEYLVYQFTGDEKRTQQTPWKTLDWVQEVQQRGAGEIVLNMMNQDGVRQGYDLKQLALVRQVTQVPMIASGGAGEMSHFLDAFKLANVDGALAASVFHKQIININELKQYLAENGVKVRI.

Active-site residues include Asp-11 and Asp-130.

The protein belongs to the HisA/HisF family. In terms of assembly, heterodimer of HisH and HisF.

The protein localises to the cytoplasm. It carries out the reaction 5-[(5-phospho-1-deoxy-D-ribulos-1-ylimino)methylamino]-1-(5-phospho-beta-D-ribosyl)imidazole-4-carboxamide + L-glutamine = D-erythro-1-(imidazol-4-yl)glycerol 3-phosphate + 5-amino-1-(5-phospho-beta-D-ribosyl)imidazole-4-carboxamide + L-glutamate + H(+). Its pathway is amino-acid biosynthesis; L-histidine biosynthesis; L-histidine from 5-phospho-alpha-D-ribose 1-diphosphate: step 5/9. Its function is as follows. IGPS catalyzes the conversion of PRFAR and glutamine to IGP, AICAR and glutamate. The HisF subunit catalyzes the cyclization activity that produces IGP and AICAR from PRFAR using the ammonia provided by the HisH subunit. The sequence is that of Imidazole glycerol phosphate synthase subunit HisF from Proteus mirabilis (strain HI4320).